The following is a 94-amino-acid chain: Acylphosphatase (94 aa).

In terms of domain architecture, Acylphosphatase-like spans 7 to 94; the sequence is AALVRITGRV…EAPAGFRITR (88 aa). Catalysis depends on residues Arg22 and Asn40.

The protein belongs to the acylphosphatase family.

It catalyses the reaction an acyl phosphate + H2O = a carboxylate + phosphate + H(+). This is Acylphosphatase (acyP) from Sinorhizobium medicae (strain WSM419) (Ensifer medicae).